A 1006-amino-acid chain; its full sequence is Beta-galactosidase (1006 aa).

A signal peptide spans 1–19; the sequence is MKLSSACAIALLAAQAAGA. A glycan (N-linked (GlcNAc...) asparagine) is linked at asparagine 156. Catalysis depends on glutamate 200, which acts as the Proton donor. Glutamate 298 serves as the catalytic Nucleophile. Residues asparagine 373, asparagine 402, asparagine 422, asparagine 478, asparagine 522, asparagine 622, asparagine 739, asparagine 760, asparagine 777, and asparagine 805 are each glycosylated (N-linked (GlcNAc...) asparagine).

The protein belongs to the glycosyl hydrolase 35 family.

The catalysed reaction is Hydrolysis of terminal non-reducing beta-D-galactose residues in beta-D-galactosides.. Functionally, cleaves beta-linked terminal galactosyl residues from gangliosides, glycoproteins, and glycosaminoglycans. The sequence is that of Beta-galactosidase (lacA) from Aspergillus niger.